The sequence spans 164 residues: uncharacterized protein (164 aa).

Residues 1 to 60 (MERSASVGVNDGRFGGNQFYSPSFSSSSSSSSMRHVNYSCGSCGYELNLSSTNRITSTIG) constitute a chloroplast transit peptide.

The protein resides in the plastid. It is found in the chloroplast. This is an uncharacterized protein from Arabidopsis thaliana (Mouse-ear cress).